We begin with the raw amino-acid sequence, 372 residues long: N-methyl-L-tryptophan oxidase (372 aa).

4–34 (DLIIIGSGSVGAAAGYYATRAGLNVLMTDAH) serves as a coordination point for FAD. Residue C308 is modified to S-8alpha-FAD cysteine.

The protein belongs to the MSOX/MTOX family. MTOX subfamily. Monomer. FAD is required as a cofactor.

The catalysed reaction is N(alpha)-methyl-L-tryptophan + O2 + H2O = L-tryptophan + formaldehyde + H2O2. Functionally, catalyzes the oxidative demethylation of N-methyl-L-tryptophan. The sequence is that of N-methyl-L-tryptophan oxidase from Shigella boydii serotype 18 (strain CDC 3083-94 / BS512).